The following is a 190-amino-acid chain: ATP synthase subunit delta (190 aa).

Belongs to the ATPase delta chain family. As to quaternary structure, F-type ATPases have 2 components, F(1) - the catalytic core - and F(0) - the membrane proton channel. F(1) has five subunits: alpha(3), beta(3), gamma(1), delta(1), epsilon(1). F(0) has three main subunits: a(1), b(2) and c(10-14). The alpha and beta chains form an alternating ring which encloses part of the gamma chain. F(1) is attached to F(0) by a central stalk formed by the gamma and epsilon chains, while a peripheral stalk is formed by the delta and b chains.

It is found in the cell inner membrane. F(1)F(0) ATP synthase produces ATP from ADP in the presence of a proton or sodium gradient. F-type ATPases consist of two structural domains, F(1) containing the extramembraneous catalytic core and F(0) containing the membrane proton channel, linked together by a central stalk and a peripheral stalk. During catalysis, ATP synthesis in the catalytic domain of F(1) is coupled via a rotary mechanism of the central stalk subunits to proton translocation. Its function is as follows. This protein is part of the stalk that links CF(0) to CF(1). It either transmits conformational changes from CF(0) to CF(1) or is implicated in proton conduction. The polypeptide is ATP synthase subunit delta (Anaplasma marginale (strain Florida)).